Reading from the N-terminus, the 99-residue chain is Small ribosomal subunit protein eS24 (99 aa).

It belongs to the eukaryotic ribosomal protein eS24 family.

In Pyrococcus abyssi (strain GE5 / Orsay), this protein is Small ribosomal subunit protein eS24.